A 1143-amino-acid chain; its full sequence is Exportin-T (1143 aa).

Residues 566-593 are disordered; it reads ARNKLRAAQGSGRTTPSSSDNVDLGPSS. Residues 576–593 show a composition bias toward polar residues; sequence SGRTTPSSSDNVDLGPSS.

This sequence belongs to the exportin family.

Its subcellular location is the nucleus. The protein resides in the cytoplasm. Its function is as follows. tRNA nucleus export receptor which facilitates tRNA translocation across the nuclear pore complex. Involved in pre-tRNA splicing, probably by affecting the interaction of pre-tRNA with splicing endonuclease. The polypeptide is Exportin-T (LOS1) (Cryptococcus neoformans var. neoformans serotype D (strain JEC21 / ATCC MYA-565) (Filobasidiella neoformans)).